Here is a 227-residue protein sequence, read N- to C-terminus: NAD(P)H-quinone oxidoreductase subunit K, chloroplastic (227 aa).

C43, C44, C108, and C139 together coordinate [4Fe-4S] cluster.

It belongs to the complex I 20 kDa subunit family. As to quaternary structure, NDH is composed of at least 16 different subunits, 5 of which are encoded in the nucleus. [4Fe-4S] cluster is required as a cofactor.

The protein localises to the plastid. It localises to the chloroplast thylakoid membrane. The enzyme catalyses a plastoquinone + NADH + (n+1) H(+)(in) = a plastoquinol + NAD(+) + n H(+)(out). It catalyses the reaction a plastoquinone + NADPH + (n+1) H(+)(in) = a plastoquinol + NADP(+) + n H(+)(out). Its function is as follows. NDH shuttles electrons from NAD(P)H:plastoquinone, via FMN and iron-sulfur (Fe-S) centers, to quinones in the photosynthetic chain and possibly in a chloroplast respiratory chain. The immediate electron acceptor for the enzyme in this species is believed to be plastoquinone. Couples the redox reaction to proton translocation, and thus conserves the redox energy in a proton gradient. This Citrus sinensis (Sweet orange) protein is NAD(P)H-quinone oxidoreductase subunit K, chloroplastic.